The following is a 448-amino-acid chain: Exodeoxyribonuclease 7 large subunit (448 aa).

Belongs to the XseA family. As to quaternary structure, heterooligomer composed of large and small subunits.

It is found in the cytoplasm. It catalyses the reaction Exonucleolytic cleavage in either 5'- to 3'- or 3'- to 5'-direction to yield nucleoside 5'-phosphates.. Its function is as follows. Bidirectionally degrades single-stranded DNA into large acid-insoluble oligonucleotides, which are then degraded further into small acid-soluble oligonucleotides. This chain is Exodeoxyribonuclease 7 large subunit, found in Nitrosomonas eutropha (strain DSM 101675 / C91 / Nm57).